Consider the following 261-residue polypeptide: MTIQSLIVTIGSGGLVGFALGLLGGGGSILATPLLLYVVGVTNPHIAIGTSAVAVSVNAYANLIAHAWKGHVWWRSAVIFALVGTLGAFLGSSIGMLIDGQRLLLLFGLLMAMVGLLMLRGRATAPRAEHHQTVLRMCMKTSSVAILTGAASGFFGIGGGFLIVPALIFATRMPTINAIGSSLLAVGSFGLITTLNYARHDLVNWTIAMEFIVGGITGGGLGTLLATRLSASKHLLNRVFGLIVIAVAIYVIWRSWASLVA.

8 helical membrane passes run 6 to 26 (LIVTIGSGGLVGFALGLLGGG), 45 to 64 (HIAIGTSAVAVSVNAYANLI), 78 to 98 (VIFALVGTLGAFLGSSIGMLI), 99 to 119 (DGQRLLLLFGLLMAMVGLLML), 150 to 170 (AASGFFGIGGGFLIVPALIFA), 175 to 195 (TINAIGSSLLAVGSFGLITTL), 205 to 225 (WTIAMEFIVGGITGGGLGTLL), and 239 to 259 (VFGLIVIAVAIYVIWRSWASL).

It belongs to the 4-toluene sulfonate uptake permease (TSUP) (TC 2.A.102) family.

It localises to the cell membrane. In Xylella fastidiosa (strain Temecula1 / ATCC 700964), this protein is Probable membrane transporter protein PD_1894.